Reading from the N-terminus, the 201-residue chain is UPF0056 membrane protein PH0760 (201 aa).

A run of 6 helical transmembrane segments spans residues 8–28 (FMIL…VPVF), 49–69 (ITVF…FKFF), 73–93 (IDAF…EMLS), 111–131 (VAVI…TTVM), 140–160 (GIVI…LYSG), and 181–201 (LILT…AFGI).

The protein belongs to the UPF0056 (MarC) family.

It is found in the cell membrane. The chain is UPF0056 membrane protein PH0760 from Pyrococcus horikoshii (strain ATCC 700860 / DSM 12428 / JCM 9974 / NBRC 100139 / OT-3).